Consider the following 309-residue polypeptide: Ribosomal protein L11 methyltransferase (309 aa).

Residues Thr-144, Gly-165, Asp-187, and Asn-235 each contribute to the S-adenosyl-L-methionine site.

Belongs to the methyltransferase superfamily. PrmA family.

The protein localises to the cytoplasm. It catalyses the reaction L-lysyl-[protein] + 3 S-adenosyl-L-methionine = N(6),N(6),N(6)-trimethyl-L-lysyl-[protein] + 3 S-adenosyl-L-homocysteine + 3 H(+). Its function is as follows. Methylates ribosomal protein L11. This chain is Ribosomal protein L11 methyltransferase, found in Prochlorococcus marinus (strain MIT 9215).